The primary structure comprises 309 residues: Olfactory receptor 10J5 (309 aa).

The Extracellular segment spans residues 1–27; the sequence is MQRNNFTEVIEFVFLGFSSFGKHQITL. A helical membrane pass occupies residues 28-48; sequence FVVFLTIYILTLAGNIIIVTI. Topologically, residues 49-57 are cytoplasmic; the sequence is THIDHHLHT. Residues 58–78 form a helical membrane-spanning segment; the sequence is PMYFFLSMLASSETVYTLVIV. The Extracellular segment spans residues 79–84; sequence PRMLSS. A helical membrane pass occupies residues 85–105; that stretch reads LIFYNLPISLAGCATQMFFFV. Cysteines 97 and 178 form a disulfide. Over 106 to 131 the chain is Cytoplasmic; that stretch reads TLATNNCFLLTAMGYDRYVAICNPLR. The helical transmembrane segment at 132 to 152 threads the bilayer; sequence YTIIMSKGMCALLVCGSLGTG. Over 153 to 203 the chain is Extracellular; sequence LVMAVLHVPAMFHLPFCGTVVEHFFCDIYPVMKLSCVDTTVNEIINYGVSS. The chain crosses the membrane as a helical span at residues 204-224; it reads FVILVPIGLIFISYVLIVSSI. At 225–235 the chain is on the cytoplasmic side; sequence LKIVSTEGQKK. Residues 236–256 traverse the membrane as a helical segment; the sequence is AFATCASHLTVVIVHYGCASI. Residues 257–270 are Extracellular-facing; it reads AYLKPKSESSVEKD. A helical transmembrane segment spans residues 271–291; the sequence is LLLSVTYTIITPLLNPVVYSL. Over 292-309 the chain is Cytoplasmic; the sequence is RNKEVKDALCRAVGRNTS.

Belongs to the G-protein coupled receptor 1 family. In terms of tissue distribution, expressed in the olfactory epithelium as well as in the testis. Expressed in round spermatids during stages VI-VIII of spermatogenesis.

The protein resides in the cell membrane. In terms of biological role, olfactory receptor. Activated by the synthetic floral odorant, lyral, and by alpha-cedrene, a sesquiterpene constituent of cedarwood oil. Its activation increases intracellular Ca(2+). Acts as a key regulator of myogenesis through its actions on cell migration and adhesion by activating the Ca(2+)-dependent AKT signal transduction pathway. Also acts as a regulator of angiogenesis. Moreover, plays a role in the regulation of lipid accumulation in hepatocytes via the cAMP-PKA pathway. Involved in sperm chemotaxis and motility. The polypeptide is Olfactory receptor 10J5 (Mus musculus (Mouse)).